Consider the following 92-residue polypeptide: Cell division topological specificity factor (92 aa).

It belongs to the MinE family.

Prevents the cell division inhibition by proteins MinC and MinD at internal division sites while permitting inhibition at polar sites. This ensures cell division at the proper site by restricting the formation of a division septum at the midpoint of the long axis of the cell. This chain is Cell division topological specificity factor, found in Syntrophobacter fumaroxidans (strain DSM 10017 / MPOB).